A 163-amino-acid polypeptide reads, in one-letter code: Acetolactate synthase small subunit (163 aa).

In terms of domain architecture, ACT spans 4-79 (ILSVLLENES…VFKVVNLSEQ (76 aa)).

This sequence belongs to the acetolactate synthase small subunit family. Dimer of large and small chains.

The catalysed reaction is 2 pyruvate + H(+) = (2S)-2-acetolactate + CO2. It participates in amino-acid biosynthesis; L-isoleucine biosynthesis; L-isoleucine from 2-oxobutanoate: step 1/4. Its pathway is amino-acid biosynthesis; L-valine biosynthesis; L-valine from pyruvate: step 1/4. The sequence is that of Acetolactate synthase small subunit (ilvH) from Haemophilus influenzae (strain ATCC 51907 / DSM 11121 / KW20 / Rd).